The chain runs to 769 residues: Multiple C2 domain and transmembrane region protein 5 (769 aa).

C2 domains follow at residues 23–143 (SVTG…PQWY), 184–305 (PEGV…SRWF), and 345–467 (YSSD…THSY). Residues Asp56, Asp62, Asp109, Asp111, and Asp116 each contribute to the Ca(2+) site. A run of 2 helical transmembrane segments spans residues 604-624 (IILV…LFLI) and 712-732 (LFVL…FQVV).

The protein belongs to the MCTP family. The cofactor is Ca(2+). In terms of tissue distribution, highly expressed in roots meristems and shoot apical meristems (SAMs). Observed in flowers.

Its subcellular location is the endoplasmic reticulum membrane. In terms of biological role, may function as a signaling molecule by regulating the trafficking of other regulators. This chain is Multiple C2 domain and transmembrane region protein 5, found in Arabidopsis thaliana (Mouse-ear cress).